We begin with the raw amino-acid sequence, 541 residues long: Zinc finger protein 329 (541 aa).

The residue at position 50 (Ser-50) is a Phosphoserine. 12 C2H2-type zinc fingers span residues 203–225, 231–253, 259–281, 287–309, 315–337, 343–365, 371–393, 399–421, 427–449, 455–477, 483–505, and 511–533; these read YRCT…HRTH, YTCN…QRIH, YECS…QRIH, YECL…QRTH, YRCN…LRIH, YECS…ERTH, FECA…QKIH, YECK…QRIH, YGCN…QRTH, YECN…QRIH, YQCP…QRLH, and SRCP…QRAH.

The protein belongs to the krueppel C2H2-type zinc-finger protein family.

It localises to the nucleus. Its function is as follows. May be involved in transcriptional regulation. The protein is Zinc finger protein 329 (ZNF329) of Homo sapiens (Human).